Here is an 880-residue protein sequence, read N- to C-terminus: DNA mismatch repair protein MutS (880 aa).

624–631 (GPNMAGKS) contacts ATP.

This sequence belongs to the DNA mismatch repair MutS family.

This protein is involved in the repair of mismatches in DNA. It is possible that it carries out the mismatch recognition step. This protein has a weak ATPase activity. This chain is DNA mismatch repair protein MutS, found in Alkaliphilus metalliredigens (strain QYMF).